The primary structure comprises 540 residues: Glucose-6-phosphate isomerase (540 aa).

The active-site Proton donor is Glu350. Catalysis depends on residues His381 and Lys503.

It belongs to the GPI family.

It localises to the cytoplasm. The catalysed reaction is alpha-D-glucose 6-phosphate = beta-D-fructose 6-phosphate. The protein operates within carbohydrate biosynthesis; gluconeogenesis. It functions in the pathway carbohydrate degradation; glycolysis; D-glyceraldehyde 3-phosphate and glycerone phosphate from D-glucose: step 2/4. Its function is as follows. Catalyzes the reversible isomerization of glucose-6-phosphate to fructose-6-phosphate. The polypeptide is Glucose-6-phosphate isomerase (Burkholderia ambifaria (strain MC40-6)).